We begin with the raw amino-acid sequence, 263 residues long: Ret finger protein-like 4B (263 aa).

The RING-type zinc-finger motif lies at 11 to 53; it reads CPVCLDFFSCSISLSCTHVFCFDCIQRYILENHDFRAMCPLCR. The region spanning 76 to 263 is the B30.2/SPRY domain; sequence HNSRLEQSLH…ESGNVLTICP (188 aa).

In Homo sapiens (Human), this protein is Ret finger protein-like 4B (RFPL4B).